The chain runs to 572 residues: 2-succinyl-5-enolpyruvyl-6-hydroxy-3-cyclohexene-1-carboxylate synthase (572 aa).

Belongs to the TPP enzyme family. MenD subfamily. As to quaternary structure, homodimer. Requires Mg(2+) as cofactor. Mn(2+) serves as cofactor. The cofactor is thiamine diphosphate.

It carries out the reaction isochorismate + 2-oxoglutarate + H(+) = 5-enolpyruvoyl-6-hydroxy-2-succinyl-cyclohex-3-ene-1-carboxylate + CO2. Its pathway is quinol/quinone metabolism; 1,4-dihydroxy-2-naphthoate biosynthesis; 1,4-dihydroxy-2-naphthoate from chorismate: step 2/7. It participates in quinol/quinone metabolism; menaquinone biosynthesis. In terms of biological role, catalyzes the thiamine diphosphate-dependent decarboxylation of 2-oxoglutarate and the subsequent addition of the resulting succinic semialdehyde-thiamine pyrophosphate anion to isochorismate to yield 2-succinyl-5-enolpyruvyl-6-hydroxy-3-cyclohexene-1-carboxylate (SEPHCHC). This Shewanella amazonensis (strain ATCC BAA-1098 / SB2B) protein is 2-succinyl-5-enolpyruvyl-6-hydroxy-3-cyclohexene-1-carboxylate synthase.